Consider the following 206-residue polypeptide: Pyridoxine/pyridoxamine 5'-phosphate oxidase (206 aa).

Residues 53–58, 68–69, K75, and Q97 contribute to the FMN site; these read RMVLLK and YT. K58 is a binding site for substrate. Substrate-binding residues include Y115, R119, and S123. FMN contacts are provided by residues 132–133 and W177; that span reads QS. Residue 183–185 coordinates substrate; the sequence is RLH. FMN is bound at residue R187.

This sequence belongs to the pyridoxamine 5'-phosphate oxidase family. In terms of assembly, homodimer. FMN is required as a cofactor.

It carries out the reaction pyridoxamine 5'-phosphate + O2 + H2O = pyridoxal 5'-phosphate + H2O2 + NH4(+). The catalysed reaction is pyridoxine 5'-phosphate + O2 = pyridoxal 5'-phosphate + H2O2. It participates in cofactor metabolism; pyridoxal 5'-phosphate salvage; pyridoxal 5'-phosphate from pyridoxamine 5'-phosphate: step 1/1. It functions in the pathway cofactor metabolism; pyridoxal 5'-phosphate salvage; pyridoxal 5'-phosphate from pyridoxine 5'-phosphate: step 1/1. Functionally, catalyzes the oxidation of either pyridoxine 5'-phosphate (PNP) or pyridoxamine 5'-phosphate (PMP) into pyridoxal 5'-phosphate (PLP). The protein is Pyridoxine/pyridoxamine 5'-phosphate oxidase of Rhizobium leguminosarum bv. trifolii (strain WSM2304).